The chain runs to 418 residues: Serine hydroxymethyltransferase (418 aa).

(6S)-5,6,7,8-tetrahydrofolate is bound by residues Leu121 and 125–127; that span reads GHL. Position 230 is an N6-(pyridoxal phosphate)lysine (Lys230). 355 to 357 is a binding site for (6S)-5,6,7,8-tetrahydrofolate; sequence SPF.

It belongs to the SHMT family. As to quaternary structure, homodimer. Pyridoxal 5'-phosphate is required as a cofactor.

The protein resides in the cytoplasm. It carries out the reaction (6R)-5,10-methylene-5,6,7,8-tetrahydrofolate + glycine + H2O = (6S)-5,6,7,8-tetrahydrofolate + L-serine. Its pathway is one-carbon metabolism; tetrahydrofolate interconversion. The protein operates within amino-acid biosynthesis; glycine biosynthesis; glycine from L-serine: step 1/1. Functionally, catalyzes the reversible interconversion of serine and glycine with tetrahydrofolate (THF) serving as the one-carbon carrier. This reaction serves as the major source of one-carbon groups required for the biosynthesis of purines, thymidylate, methionine, and other important biomolecules. Also exhibits THF-independent aldolase activity toward beta-hydroxyamino acids, producing glycine and aldehydes, via a retro-aldol mechanism. This is Serine hydroxymethyltransferase from Alcanivorax borkumensis (strain ATCC 700651 / DSM 11573 / NCIMB 13689 / SK2).